We begin with the raw amino-acid sequence, 1273 residues long: DNA polymerase 037L (1273 aa).

The stretch at 679–837 forms a coiled coil; it reads IRKNAITEEL…ENKSKEDIDE (159 aa).

Belongs to the DNA polymerase type-B family.

It carries out the reaction DNA(n) + a 2'-deoxyribonucleoside 5'-triphosphate = DNA(n+1) + diphosphate. DNA-directed DNA polymerase involved in viral DNA replication. The polypeptide is DNA polymerase 037L (DPOL) (Invertebrate iridescent virus 6 (IIV-6)).